The sequence spans 350 residues: Solute carrier family 35 member E4 (350 aa).

Over residues glycine 19 to proline 30 the composition is skewed to low complexity. The interval glycine 19–arginine 42 is disordered. 8 consecutive transmembrane segments (helical) span residues methionine 51 to phenylalanine 71, valine 73 to alanine 93, valine 110 to proline 132, leucine 135 to leucine 155, valine 218 to valine 238, isoleucine 258 to leucine 278, threonine 279 to serine 299, and tyrosine 312 to alanine 332. The EamA domain occupies asparagine 125–alanine 179.

Belongs to the TPT transporter family. SLC35E subfamily.

Its subcellular location is the membrane. Its function is as follows. Putative transporter. The polypeptide is Solute carrier family 35 member E4 (SLC35E4) (Homo sapiens (Human)).